A 401-amino-acid polypeptide reads, in one-letter code: tRNA(Met) cytidine acetate ligase (401 aa).

ATP-binding positions include 7–20 (IVEY…HLYH), Gly-102, Asn-164, and Arg-189.

This sequence belongs to the TmcAL family.

It localises to the cytoplasm. It carries out the reaction cytidine(34) in elongator tRNA(Met) + acetate + ATP = N(4)-acetylcytidine(34) in elongator tRNA(Met) + AMP + diphosphate. In terms of biological role, catalyzes the formation of N(4)-acetylcytidine (ac(4)C) at the wobble position of elongator tRNA(Met), using acetate and ATP as substrates. First activates an acetate ion to form acetyladenylate (Ac-AMP) and then transfers the acetyl group to tRNA to form ac(4)C34. The chain is tRNA(Met) cytidine acetate ligase from Caldanaerobacter subterraneus subsp. tengcongensis (strain DSM 15242 / JCM 11007 / NBRC 100824 / MB4) (Thermoanaerobacter tengcongensis).